A 120-amino-acid chain; its full sequence is Putative gamma-glutamylcyclotransferase MJ1514 (120 aa).

Residue 7-10 (YGSL) participates in substrate binding. Catalysis depends on glutamate 74, which acts as the Proton acceptor.

This sequence belongs to the gamma-glutamylcyclotransferase family.

Its function is as follows. Putative gamma-glutamylcyclotransferase. The polypeptide is Putative gamma-glutamylcyclotransferase MJ1514 (Methanocaldococcus jannaschii (strain ATCC 43067 / DSM 2661 / JAL-1 / JCM 10045 / NBRC 100440) (Methanococcus jannaschii)).